The sequence spans 157 residues: 2-C-methyl-D-erythritol 2,4-cyclodiphosphate synthase (157 aa).

3 residues coordinate a divalent metal cation: Asp-8, His-10, and His-42. 8-10 (DVH) is a 4-CDP-2-C-methyl-D-erythritol 2-phosphate binding site. 4-CDP-2-C-methyl-D-erythritol 2-phosphate contacts are provided by residues 56–58 (DIG), 132–135 (STSE), Phe-139, and Arg-142.

It belongs to the IspF family. As to quaternary structure, homotrimer. Requires a divalent metal cation as cofactor.

It carries out the reaction 4-CDP-2-C-methyl-D-erythritol 2-phosphate = 2-C-methyl-D-erythritol 2,4-cyclic diphosphate + CMP. The protein operates within isoprenoid biosynthesis; isopentenyl diphosphate biosynthesis via DXP pathway; isopentenyl diphosphate from 1-deoxy-D-xylulose 5-phosphate: step 4/6. Its function is as follows. Involved in the biosynthesis of isopentenyl diphosphate (IPP) and dimethylallyl diphosphate (DMAPP), two major building blocks of isoprenoid compounds. Catalyzes the conversion of 4-diphosphocytidyl-2-C-methyl-D-erythritol 2-phosphate (CDP-ME2P) to 2-C-methyl-D-erythritol 2,4-cyclodiphosphate (ME-CPP) with a corresponding release of cytidine 5-monophosphate (CMP). This Dehalococcoides mccartyi (strain CBDB1) protein is 2-C-methyl-D-erythritol 2,4-cyclodiphosphate synthase.